A 436-amino-acid polypeptide reads, in one-letter code: 2-aminohexano-6-lactam racemase (436 aa).

Pyridoxal 5'-phosphate-binding positions include 110–111 (GS), tyrosine 137, and 238–241 (DEVK). Residue tyrosine 137 is part of the active site. N6-(pyridoxal phosphate)lysine is present on lysine 267. Threonine 295 serves as a coordination point for pyridoxal 5'-phosphate.

The protein belongs to the class-III pyridoxal-phosphate-dependent aminotransferase family. As to quaternary structure, monomer. It depends on pyridoxal 5'-phosphate as a cofactor.

It carries out the reaction L-2-aminohexano-6-lactam = D-2-aminohexano-6-lactam. Its function is as follows. catalyzes the interconversion of L-alpha-amino-epsilon-caprolactam and D-alpha-amino-epsilon-caprolactam. This is 2-aminohexano-6-lactam racemase from Achromobacter obae.